A 1650-amino-acid polypeptide reads, in one-letter code: HEAT repeat-containing protein 1 homolog (1650 aa).

Residues 1183-1210 (QYDSAASPGSSVAGGRGNRGHRIRQQSL) form a disordered region. The stretch at 1609–1645 (LLPFLNELIEDENKQVEAQCQKVINSLQHKFGETFWS) is one HEAT repeat.

It belongs to the HEATR1/UTP10 family.

The protein localises to the nucleus. It localises to the nucleolus. Functionally, involved in nucleolar processing of pre-18S ribosomal RNA. Involved in ribosome biosynthesis. The sequence is that of HEAT repeat-containing protein 1 homolog (toe-1) from Caenorhabditis elegans.